The chain runs to 206 residues: Small ribosomal subunit protein uS4 (206 aa).

The S4 RNA-binding domain occupies 98-158 (RRLDNVVFRL…EKSRSMELIK (61 aa)).

Belongs to the universal ribosomal protein uS4 family. As to quaternary structure, part of the 30S ribosomal subunit. Contacts protein S5. The interaction surface between S4 and S5 is involved in control of translational fidelity.

One of the primary rRNA binding proteins, it binds directly to 16S rRNA where it nucleates assembly of the body of the 30S subunit. Its function is as follows. With S5 and S12 plays an important role in translational accuracy. This is Small ribosomal subunit protein uS4 from Thermoanaerobacter pseudethanolicus (strain ATCC 33223 / 39E) (Clostridium thermohydrosulfuricum).